A 424-amino-acid chain; its full sequence is Tyrosine--tRNA ligase (424 aa).

Tyr37 lines the L-tyrosine pocket. A 'HIGH' region motif is present at residues 42-51 (PTADSLHLGH). Residues Tyr175 and Gln179 each coordinate L-tyrosine. The short motif at 235–239 (KFGKT) is the 'KMSKS' region element. Residue Lys238 participates in ATP binding. Residues 357–414 (ADLQQALVNAELVPSRGQARTMIGSNAVTINGEKQSNAEYNFSDADRLFGRYTLLRRG) enclose the S4 RNA-binding domain.

The protein belongs to the class-I aminoacyl-tRNA synthetase family. TyrS type 1 subfamily. Homodimer.

The protein localises to the cytoplasm. It carries out the reaction tRNA(Tyr) + L-tyrosine + ATP = L-tyrosyl-tRNA(Tyr) + AMP + diphosphate + H(+). In terms of biological role, catalyzes the attachment of tyrosine to tRNA(Tyr) in a two-step reaction: tyrosine is first activated by ATP to form Tyr-AMP and then transferred to the acceptor end of tRNA(Tyr). The protein is Tyrosine--tRNA ligase of Serratia proteamaculans (strain 568).